A 303-amino-acid chain; its full sequence is Probable 5-dehydro-4-deoxyglucarate dehydratase (303 aa).

Belongs to the DapA family.

The catalysed reaction is 5-dehydro-4-deoxy-D-glucarate + H(+) = 2,5-dioxopentanoate + CO2 + H2O. It functions in the pathway carbohydrate acid metabolism; D-glucarate degradation; 2,5-dioxopentanoate from D-glucarate: step 2/2. The polypeptide is Probable 5-dehydro-4-deoxyglucarate dehydratase (Pseudomonas putida (strain GB-1)).